The sequence spans 421 residues: Tyrosine--tRNA ligase (421 aa).

Tyr42 lines the L-tyrosine pocket. Positions 47–56 match the 'HIGH' region motif; sequence CTAPSLHVGS. L-tyrosine contacts are provided by Tyr179 and Gln183. A 'KMSKS' region motif is present at residues 239 to 243; sequence KMGKT. Lys242 contributes to the ATP binding site. One can recognise an S4 RNA-binding domain in the interval 354 to 419; the sequence is LGILAAFAKA…RKKHVLLRLA (66 aa).

This sequence belongs to the class-I aminoacyl-tRNA synthetase family. TyrS type 1 subfamily. As to quaternary structure, homodimer.

The protein resides in the cytoplasm. The enzyme catalyses tRNA(Tyr) + L-tyrosine + ATP = L-tyrosyl-tRNA(Tyr) + AMP + diphosphate + H(+). In terms of biological role, catalyzes the attachment of tyrosine to tRNA(Tyr) in a two-step reaction: tyrosine is first activated by ATP to form Tyr-AMP and then transferred to the acceptor end of tRNA(Tyr). This is Tyrosine--tRNA ligase from Beijerinckia indica subsp. indica (strain ATCC 9039 / DSM 1715 / NCIMB 8712).